Consider the following 312-residue polypeptide: Glycine--tRNA ligase alpha subunit (312 aa).

It belongs to the class-II aminoacyl-tRNA synthetase family. In terms of assembly, tetramer of two alpha and two beta subunits.

Its subcellular location is the cytoplasm. It carries out the reaction tRNA(Gly) + glycine + ATP = glycyl-tRNA(Gly) + AMP + diphosphate. This is Glycine--tRNA ligase alpha subunit from Thiobacillus denitrificans (strain ATCC 25259 / T1).